Consider the following 338-residue polypeptide: Lipoate-protein ligase A (338 aa).

One can recognise a BPL/LPL catalytic domain in the interval 29-216 (PATQRVLFLW…AFFAHYGERV (188 aa)). ATP is bound by residues arginine 71, 76–79 (GAVF), and lysine 134. Lysine 134 is a (R)-lipoate binding site.

Belongs to the LplA family. Monomer.

Its subcellular location is the cytoplasm. It catalyses the reaction L-lysyl-[lipoyl-carrier protein] + (R)-lipoate + ATP = N(6)-[(R)-lipoyl]-L-lysyl-[lipoyl-carrier protein] + AMP + diphosphate + H(+). It functions in the pathway protein modification; protein lipoylation via exogenous pathway; protein N(6)-(lipoyl)lysine from lipoate: step 1/2. It participates in protein modification; protein lipoylation via exogenous pathway; protein N(6)-(lipoyl)lysine from lipoate: step 2/2. Its function is as follows. Catalyzes both the ATP-dependent activation of exogenously supplied lipoate to lipoyl-AMP and the transfer of the activated lipoyl onto the lipoyl domains of lipoate-dependent enzymes. The protein is Lipoate-protein ligase A of Escherichia coli O8 (strain IAI1).